The chain runs to 225 residues: UPF0758 protein XOO0495 (225 aa).

One can recognise an MPN domain in the interval 102-224 (ALSDPPSVGR…PVSLAERGWL (123 aa)). The Zn(2+) site is built by His-173, His-175, and Asp-186. Positions 173–186 (HNHPSGNPEPSKAD) match the JAMM motif motif.

It belongs to the UPF0758 family.

In Xanthomonas oryzae pv. oryzae (strain KACC10331 / KXO85), this protein is UPF0758 protein XOO0495.